Here is a 672-residue protein sequence, read N- to C-terminus: MSQKDIEMELKELRNKLNRWSNEYYVLDTPSVEDSVYDKHYQRLLELEQANPDLVTADSPSQRVGGKVLSGFTKVSHDIPMLSLGDVFSKEELIEFLERLENSVEQKLDYSCELKIDGLAISLTYENGKFIKGSTRGNGVIGEDITENLKTIKAIPMELNEPVSIEVRGECYMPKKSFVELNTKREAEGQAVFANPRNAAAGSLRQLDTKITASRNLSTFIYYLMEPEKLGIKTQTEALNKLESWGFKVNNESKQVKTKEEIFAYIDKATDQRANLPYDIDGIVLKAESFAVQSQVGNTVKVPRWAIAYKFPPDEQETKVLDIEWTVGRTGVVTPTAVMEPVTLAGTTVARASLHNPDYLKEKDIRIGDTVKLHKAGDIIPEISEVVLAKRTEDSVEYQIPTECPECGAKLVHLDDEVALRCINPQCPALVKESLTHFASRNAMDIRGLGPRIIEQLYNREMIKDVAGIYSLTFEQLITLDKFKEKSANNLLTAIDNSRNNSIERLIFGLGIRHVGAKVARILAENYKSMDNLAKAKSDEISTIDSLGKIIGDSVEMYFADEHVMELLDELRQAGVNLEFLGKTREEQLESSTDSSFNGLRVVLTGTLDTLKRSEAKSWLEAHGAKVTGSVSKKTDLLIAGHDAGSKLTKAQELNVRVMNEAEFIQQMEEES.

Residues 34–38 (DSVYD), 83–84 (SL), and Glu113 contribute to the NAD(+) site. The active-site N6-AMP-lysine intermediate is Lys115. 4 residues coordinate NAD(+): Arg136, Glu170, Lys286, and Lys310. Residues Cys404, Cys407, Cys422, and Cys427 each contribute to the Zn(2+) site. In terms of domain architecture, BRCT spans 592–672 (STDSSFNGLR…EFIQQMEEES (81 aa)).

Belongs to the NAD-dependent DNA ligase family. LigA subfamily. Requires Mg(2+) as cofactor. Mn(2+) serves as cofactor.

The catalysed reaction is NAD(+) + (deoxyribonucleotide)n-3'-hydroxyl + 5'-phospho-(deoxyribonucleotide)m = (deoxyribonucleotide)n+m + AMP + beta-nicotinamide D-nucleotide.. Its function is as follows. DNA ligase that catalyzes the formation of phosphodiester linkages between 5'-phosphoryl and 3'-hydroxyl groups in double-stranded DNA using NAD as a coenzyme and as the energy source for the reaction. It is essential for DNA replication and repair of damaged DNA. The chain is DNA ligase from Ligilactobacillus salivarius (strain UCC118) (Lactobacillus salivarius).